Consider the following 558-residue polypeptide: DALR anticodon-binding domain-containing protein 3 (558 aa).

A disordered region spans residues 213–240 (KALENSAYRDRETEKGKRRSRGEEIEGE).

This chain is DALR anticodon-binding domain-containing protein 3 (dalrd3), found in Danio rerio (Zebrafish).